A 393-amino-acid polypeptide reads, in one-letter code: MASIGTPLTPTATRILLLGSGELGREVALEAMRLGVEVVAVDRYPNAPAMQVAHRSHVVSMLDGAALRAIIEAEKPYCIVPEIEAIATGTLLELEQEGYRVVPTARAARLTMDREGIRRLAAEELGLPTSPYRFASTEEEYRAAIETVGLPCVVKPVMSSSGKGQSLVRTPADIDSAWAYAQTGGRAGAGRVIVEGFVDFDYEITLLTVRHAGGVTFCDPIGHLQKDGDYRESWQPQPMDAVALEKARAMADAVTGALGGWGIFGVELFVRGDEVWFSEVSPRPHDTGLVTLISQNMSEFALHVRAILGLPVPLLRQNGPAASCVILAEGDSEAPRFHGVDAALAEQDTALCLFGKPEVHGRRRMGVALALGDDIDAARAKARRAAGSVTVEL.

N(1)-(5-phospho-beta-D-ribosyl)glycinamide is bound by residues Glu-22 to Leu-23 and Glu-82. Residues Arg-114, Lys-155, Ser-160–Gln-165, Glu-195–Val-198, and Glu-203 contribute to the ATP site. In terms of domain architecture, ATP-grasp spans Arg-119–Leu-308. Mg(2+) contacts are provided by Glu-267 and Glu-279. N(1)-(5-phospho-beta-D-ribosyl)glycinamide-binding positions include Asp-286, Lys-356, and Arg-363–Arg-364.

Belongs to the PurK/PurT family. In terms of assembly, homodimer.

The enzyme catalyses N(1)-(5-phospho-beta-D-ribosyl)glycinamide + formate + ATP = N(2)-formyl-N(1)-(5-phospho-beta-D-ribosyl)glycinamide + ADP + phosphate + H(+). The protein operates within purine metabolism; IMP biosynthesis via de novo pathway; N(2)-formyl-N(1)-(5-phospho-D-ribosyl)glycinamide from N(1)-(5-phospho-D-ribosyl)glycinamide (formate route): step 1/1. Functionally, involved in the de novo purine biosynthesis. Catalyzes the transfer of formate to 5-phospho-ribosyl-glycinamide (GAR), producing 5-phospho-ribosyl-N-formylglycinamide (FGAR). Formate is provided by PurU via hydrolysis of 10-formyl-tetrahydrofolate. The polypeptide is Formate-dependent phosphoribosylglycinamide formyltransferase (Nitratidesulfovibrio vulgaris (strain ATCC 29579 / DSM 644 / CCUG 34227 / NCIMB 8303 / VKM B-1760 / Hildenborough) (Desulfovibrio vulgaris)).